A 167-amino-acid chain; its full sequence is Ribosome maturation factor RimM (167 aa).

Residues 94-166 (TGRAYLHELI…YMVVPRFDEF (73 aa)) form the PRC barrel domain.

This sequence belongs to the RimM family. As to quaternary structure, binds ribosomal protein uS19.

The protein resides in the cytoplasm. Functionally, an accessory protein needed during the final step in the assembly of 30S ribosomal subunit, possibly for assembly of the head region. Essential for efficient processing of 16S rRNA. May be needed both before and after RbfA during the maturation of 16S rRNA. It has affinity for free ribosomal 30S subunits but not for 70S ribosomes. The sequence is that of Ribosome maturation factor RimM from Chlorobium phaeobacteroides (strain DSM 266 / SMG 266 / 2430).